We begin with the raw amino-acid sequence, 89 residues long: Small ribosomal subunit protein uS17 (89 aa).

It belongs to the universal ribosomal protein uS17 family. As to quaternary structure, part of the 30S ribosomal subunit.

Functionally, one of the primary rRNA binding proteins, it binds specifically to the 5'-end of 16S ribosomal RNA. The sequence is that of Small ribosomal subunit protein uS17 from Syntrophomonas wolfei subsp. wolfei (strain DSM 2245B / Goettingen).